The primary structure comprises 576 residues: Proline--tRNA ligase (576 aa).

The protein belongs to the class-II aminoacyl-tRNA synthetase family. ProS type 1 subfamily. In terms of assembly, homodimer.

It localises to the cytoplasm. It carries out the reaction tRNA(Pro) + L-proline + ATP = L-prolyl-tRNA(Pro) + AMP + diphosphate. In terms of biological role, catalyzes the attachment of proline to tRNA(Pro) in a two-step reaction: proline is first activated by ATP to form Pro-AMP and then transferred to the acceptor end of tRNA(Pro). As ProRS can inadvertently accommodate and process non-cognate amino acids such as alanine and cysteine, to avoid such errors it has two additional distinct editing activities against alanine. One activity is designated as 'pretransfer' editing and involves the tRNA(Pro)-independent hydrolysis of activated Ala-AMP. The other activity is designated 'posttransfer' editing and involves deacylation of mischarged Ala-tRNA(Pro). The misacylated Cys-tRNA(Pro) is not edited by ProRS. The sequence is that of Proline--tRNA ligase from Thiobacillus denitrificans (strain ATCC 25259 / T1).